The sequence spans 474 residues: MFS transporter SAT21 (474 aa).

The next 6 membrane-spanning stretches (helical) occupy residues 7-27 (LVLPFILYLLFRLSHFLLEVP), 64-84 (LVVGWKMTFDSIPGLMSILYF), 101-121 (CVGYLLAILWVLITCLFHQVF), 131-151 (LFLFIGGGQLVFAAVITAFVA), 162-182 (FLFLLAAMPHMDKVASPALAT), and 189-209 (LFLPSLVSMAIVVICVALLQM). Residues 220-252 (KVVGSTSDQTEPFLRSSSNSSQESGTAAPAIDP) form a disordered region. Over residues 222–244 (VGSTSDQTEPFLRSSSNSSQESG) the composition is skewed to polar residues. The N-linked (GlcNAc...) asparagine glycan is linked to Asn238. Helical transmembrane passes span 276 to 296 (FICYLCFFLKSNAMASEAFIF), 315 to 335 (LALSSGAVISTLIICPLANAT), 346 to 366 (INIGAVHASSIVLVASFIMAW), 374 to 394 (FIFSMLAAGFGEGLEPALQGV), 406 to 426 (SIFALMCTCSLLGDMTGGPLM), and 445 to 465 (FLASALVFGAVIVLAHLLWAL).

It belongs to the major facilitator superfamily.

It localises to the cell membrane. Its function is as follows. MFS transporter; part of the satratoxin SC3 cluster involved in the biosynthesis of satratoxins, trichothecene mycotoxins that are associated with human food poisonings. Satratoxins are suggested to be made by products of multiple gene clusters (SC1, SC2 and SC3) that encode 21 proteins in all, including polyketide synthases, acetyltransferases, and other enzymes expected to modify the trichothecene skeleton. SC1 encodes 10 proteins, SAT1 to SAT10. The largest are SAT8, which encodes a putative polyketide synthase (PKS) with a conventional non-reducing architecture, and SAT10, a putative protein containing four ankyrin repeats and thus may be involved in protein scaffolding. The putative short-chain reductase SAT3 may assist the PKS in some capacity. SAT6 contains a secretory lipase domain and acts probably as a trichothecene esterase. SAT5 encodes a putative acetyltransferase, and so, with SAT6, may affect endogenous protection from toxicity. The probable transcription factor SAT9 may regulate the expression of the SC1 cluster. SC2 encodes proteins SAT11 to SAT16, the largest of which encodes the putative reducing PKS SAT13. SAT11 is a cytochrome P450 monooxygenase, while SAT14 and SAT16 are probable acetyltransferases. The SC2 cluster may be regulated by the transcription factor SAT15. SC3 is a small cluster that encodes 5 proteins, SAT17 to SAT21. SAT21 is a putative MFS-type transporter which may have a role in exporting secondary metabolites. The four other proteins putatively encoded in SC3 include the taurine hydroxylase-like protein SAT17, the O-methyltransferase SAT18, the acetyltransferase SAT19, and the Cys6-type zinc finger SAT20, the latter being probably involved in regulation of SC3 expression. This is MFS transporter SAT21 from Stachybotrys chartarum (strain CBS 109288 / IBT 7711) (Toxic black mold).